Reading from the N-terminus, the 169-residue chain is Inorganic pyrophosphatase (169 aa).

Positions 20, 34, and 46 each coordinate substrate. Mg(2+)-binding residues include Asp-56, Asp-61, and Asp-93. Tyr-130 contributes to the substrate binding site.

Belongs to the PPase family. In terms of assembly, homohexamer. The cofactor is Mg(2+).

It localises to the cytoplasm. It carries out the reaction diphosphate + H2O = 2 phosphate + H(+). Catalyzes the hydrolysis of inorganic pyrophosphate (PPi) forming two phosphate ions. The protein is Inorganic pyrophosphatase of Methanosarcina mazei (strain ATCC BAA-159 / DSM 3647 / Goe1 / Go1 / JCM 11833 / OCM 88) (Methanosarcina frisia).